The primary structure comprises 173 residues: Protein FAM180A (173 aa).

A signal peptide spans 1–17 (MSWKALTILLVFSSTQA).

The protein belongs to the FAM180 family.

It is found in the secreted. This Mus musculus (Mouse) protein is Protein FAM180A (Fam180a).